The primary structure comprises 1111 residues: Probable arabinosyltransferase A (1111 aa).

13 helical membrane-spanning segments follow: residues 12–34 (IIRL…VPLL), 205–224 (IAVG…LSAL), 333–355 (VWMR…HWVL), 370–387 (VAVL…LPFN), 394–413 (PLIA…AIAL), 423–445 (AVVA…ALLT), 462–484 (GLLA…VFHS), 530–547 (FPVL…VVLL), 554–576 (GLAS…LLTF), 581–603 (WAIQ…AFAF), 615–637 (TVYI…GWFG), 652–674 (IAGH…LAGG), and 695–717 (FLAT…GSLA). The tract at residues 804-831 (GLVNSDASPNKPNVTFSDSAGTAGGKGP) is disordered. Residues 808–823 (SDASPNKPNVTFSDSA) are compositionally biased toward polar residues.

The protein belongs to the emb family.

It localises to the cell membrane. Functionally, arabinosyl transferase responsible for the polymerization of arabinose into the arabinan of arabinogalactan. The chain is Probable arabinosyltransferase A (embA) from Mycobacterium leprae (strain TN).